Reading from the N-terminus, the 135-residue chain is uncharacterized protein (135 aa).

The 117-residue stretch at 13–129 folds into the Response regulatory domain; that stretch reads QVLIAENSRF…KILEKVNAAI (117 aa). Residue Asp-64 is modified to 4-aspartylphosphate.

This is an uncharacterized protein from Leptospira interrogans serogroup Icterohaemorrhagiae serovar copenhageni (strain Fiocruz L1-130).